The sequence spans 931 residues: Dual serine/threonine and tyrosine protein kinase (931 aa).

The interval 1–24 (MEGDAPQRVSERVSGPGPGGGGGG) is disordered. Residues 397 to 424 (RKKENELYESLMNIANRKQEEMKDMICE) are a coiled coil. A Protein kinase domain is found at 654 to 908 (PKLGQELGRG…PLLGIVQPML (255 aa)). Residues 660–668 (LGRGQYGVV) and K683 contribute to the ATP site. D779 acts as the Proton acceptor in catalysis.

It belongs to the protein kinase superfamily. Ser/Thr protein kinase family.

The protein localises to the cytoplasm. It is found in the cell membrane. It localises to the apical cell membrane. The protein resides in the basolateral cell membrane. Its subcellular location is the cell junction. The catalysed reaction is L-seryl-[protein] + ATP = O-phospho-L-seryl-[protein] + ADP + H(+). The enzyme catalyses L-threonyl-[protein] + ATP = O-phospho-L-threonyl-[protein] + ADP + H(+). It carries out the reaction L-tyrosyl-[protein] + ATP = O-phospho-L-tyrosyl-[protein] + ADP + H(+). Its function is as follows. Acts as a positive regulator of ERK phosphorylation downstream of fibroblast growth factor-receptor activation. Involved in the regulation of both caspase-dependent apoptosis and caspase-independent cell death. In the skin, it plays a predominant role in suppressing caspase-dependent apoptosis in response to UV stress in a range of dermal cell types. In Canis lupus familiaris (Dog), this protein is Dual serine/threonine and tyrosine protein kinase (DSTYK).